A 195-amino-acid chain; its full sequence is Imidazoleglycerol-phosphate dehydratase (195 aa).

This sequence belongs to the imidazoleglycerol-phosphate dehydratase family.

The protein resides in the cytoplasm. It catalyses the reaction D-erythro-1-(imidazol-4-yl)glycerol 3-phosphate = 3-(imidazol-4-yl)-2-oxopropyl phosphate + H2O. The protein operates within amino-acid biosynthesis; L-histidine biosynthesis; L-histidine from 5-phospho-alpha-D-ribose 1-diphosphate: step 6/9. This is Imidazoleglycerol-phosphate dehydratase from Clostridium botulinum (strain Alaska E43 / Type E3).